The following is a 416-amino-acid chain: tRNA(Met) cytidine acetate ligase (416 aa).

ATP contacts are provided by residues 7 to 20 (VVEYNPFHNGHLHH), Gly101, Asn162, and 187 to 188 (RI).

Belongs to the TmcAL family.

The protein localises to the cytoplasm. The enzyme catalyses cytidine(34) in elongator tRNA(Met) + acetate + ATP = N(4)-acetylcytidine(34) in elongator tRNA(Met) + AMP + diphosphate. In terms of biological role, catalyzes the formation of N(4)-acetylcytidine (ac(4)C) at the wobble position of elongator tRNA(Met), using acetate and ATP as substrates. First activates an acetate ion to form acetyladenylate (Ac-AMP) and then transfers the acetyl group to tRNA to form ac(4)C34. The sequence is that of tRNA(Met) cytidine acetate ligase from Halalkalibacterium halodurans (strain ATCC BAA-125 / DSM 18197 / FERM 7344 / JCM 9153 / C-125) (Bacillus halodurans).